The following is a 75-amino-acid chain: Small ribosomal subunit protein bS16 (75 aa).

This sequence belongs to the bacterial ribosomal protein bS16 family.

The chain is Small ribosomal subunit protein bS16 from Campylobacter fetus subsp. fetus (strain 82-40).